The sequence spans 874 residues: Coatomer subunit gamma-1 (874 aa).

The segment covering 1–11 (MLKKFDKKDEE) has biased composition (basic and acidic residues). Positions 1–21 (MLKKFDKKDEESGGGSNPLQH) are disordered. HEAT repeat units lie at residues 64-101 (TEAT…IAED), 283-320 (KELA…KHPS), 322-355 (VTAC…GSES), and 356-392 (SIDR…KYPR). Position 594 is a phosphothreonine (Thr594). An interaction with ZNF289/ARFGAP2 region spans residues 609–874 (RQEIFQEQLA…PVDIILASVG (266 aa)).

The protein belongs to the COPG family. Oligomeric complex that consists of at least the alpha, beta, beta', gamma, delta, epsilon and zeta subunits. Interacts with ZNF289/ARFGAP2 through its C-terminal appendage domain. Interacts with EGFR upon EGF treatment; interaction is essential for regulation of EGF-dependent nuclear transport of EGFR by retrograde trafficking from the Golgi to the ER. The coatomer interacts with KDEL receptors; the interaction is important for retrograde trafficking of KDEL-bearing proteins from the Golgi to the endoplasmic reticulum. Interacts with COPB1. Interacts with TMED10 (via C-terminus). Interacts with TMED2, TMED3, TMED7 and TMED9.

It localises to the cytoplasm. The protein localises to the cytosol. It is found in the golgi apparatus membrane. Its subcellular location is the cytoplasmic vesicle. The protein resides in the COPI-coated vesicle membrane. Its function is as follows. The coatomer is a cytosolic protein complex that binds to dilysine motifs and reversibly associates with Golgi non-clathrin-coated vesicles, which further mediate biosynthetic protein transport from the ER, via the Golgi up to the trans Golgi network. Coatomer complex is required for budding from Golgi membranes, and is essential for the retrograde Golgi-to-ER transport of dilysine-tagged proteins. In mammals, the coatomer can only be recruited by membranes associated to ADP-ribosylation factors (ARFs), which are small GTP-binding proteins; the complex also influences the Golgi structural integrity, as well as the processing, activity, and endocytic recycling of LDL receptors. Required for limiting lipid storage in lipid droplets. Involved in lipid homeostasis by regulating the presence of perilipin family members PLIN2 and PLIN3 at the lipid droplet surface and promoting the association of adipocyte triglyceride lipase (PNPLA2) with the lipid droplet surface to mediate lipolysis. This chain is Coatomer subunit gamma-1 (Copg1), found in Mus musculus (Mouse).